The following is a 616-amino-acid chain: Dihydroxy-acid dehydratase (616 aa).

Asp-81 provides a ligand contact to Mg(2+). Cys-122 is a [2Fe-2S] cluster binding site. Residues Asp-123 and Lys-124 each contribute to the Mg(2+) site. N6-carboxylysine is present on Lys-124. Cys-195 provides a ligand contact to [2Fe-2S] cluster. Glu-491 provides a ligand contact to Mg(2+). The active-site Proton acceptor is the Ser-517.

The protein belongs to the IlvD/Edd family. In terms of assembly, homodimer. Requires [2Fe-2S] cluster as cofactor. Mg(2+) serves as cofactor.

The catalysed reaction is (2R)-2,3-dihydroxy-3-methylbutanoate = 3-methyl-2-oxobutanoate + H2O. The enzyme catalyses (2R,3R)-2,3-dihydroxy-3-methylpentanoate = (S)-3-methyl-2-oxopentanoate + H2O. Its pathway is amino-acid biosynthesis; L-isoleucine biosynthesis; L-isoleucine from 2-oxobutanoate: step 3/4. It participates in amino-acid biosynthesis; L-valine biosynthesis; L-valine from pyruvate: step 3/4. Functions in the biosynthesis of branched-chain amino acids. Catalyzes the dehydration of (2R,3R)-2,3-dihydroxy-3-methylpentanoate (2,3-dihydroxy-3-methylvalerate) into 2-oxo-3-methylpentanoate (2-oxo-3-methylvalerate) and of (2R)-2,3-dihydroxy-3-methylbutanoate (2,3-dihydroxyisovalerate) into 2-oxo-3-methylbutanoate (2-oxoisovalerate), the penultimate precursor to L-isoleucine and L-valine, respectively. The chain is Dihydroxy-acid dehydratase from Escherichia fergusonii (strain ATCC 35469 / DSM 13698 / CCUG 18766 / IAM 14443 / JCM 21226 / LMG 7866 / NBRC 102419 / NCTC 12128 / CDC 0568-73).